The following is a 214-amino-acid chain: ATP-dependent Clp protease proteolytic subunit (214 aa).

The active-site Nucleophile is Ser110. Residue His135 is part of the active site.

This sequence belongs to the peptidase S14 family. Fourteen ClpP subunits assemble into 2 heptameric rings which stack back to back to give a disk-like structure with a central cavity, resembling the structure of eukaryotic proteasomes.

It is found in the cytoplasm. The catalysed reaction is Hydrolysis of proteins to small peptides in the presence of ATP and magnesium. alpha-casein is the usual test substrate. In the absence of ATP, only oligopeptides shorter than five residues are hydrolyzed (such as succinyl-Leu-Tyr-|-NHMec, and Leu-Tyr-Leu-|-Tyr-Trp, in which cleavage of the -Tyr-|-Leu- and -Tyr-|-Trp bonds also occurs).. Functionally, cleaves peptides in various proteins in a process that requires ATP hydrolysis. Has a chymotrypsin-like activity. Plays a major role in the degradation of misfolded proteins. The chain is ATP-dependent Clp protease proteolytic subunit from Legionella pneumophila (strain Paris).